The following is a 350-amino-acid chain: Biotin synthase (350 aa).

The region spanning 63 to 281 is the Radical SAM core domain; the sequence is GDIELATLLS…IAVARITMPK (219 aa). Cys-78, Cys-82, and Cys-85 together coordinate [4Fe-4S] cluster. Cys-122, Cys-153, Cys-213, and Arg-285 together coordinate [2Fe-2S] cluster.

This sequence belongs to the radical SAM superfamily. Biotin synthase family. In terms of assembly, homodimer. It depends on [4Fe-4S] cluster as a cofactor. The cofactor is [2Fe-2S] cluster.

It carries out the reaction (4R,5S)-dethiobiotin + (sulfur carrier)-SH + 2 reduced [2Fe-2S]-[ferredoxin] + 2 S-adenosyl-L-methionine = (sulfur carrier)-H + biotin + 2 5'-deoxyadenosine + 2 L-methionine + 2 oxidized [2Fe-2S]-[ferredoxin]. The protein operates within cofactor biosynthesis; biotin biosynthesis; biotin from 7,8-diaminononanoate: step 2/2. Catalyzes the conversion of dethiobiotin (DTB) to biotin by the insertion of a sulfur atom into dethiobiotin via a radical-based mechanism. The sequence is that of Biotin synthase from Acidovorax sp. (strain JS42).